The primary structure comprises 274 residues: N-acetylmuramic acid 6-phosphate etherase (274 aa).

The region spanning 54 to 217 (IIPRIDSGGR…STSVMIKLGR (164 aa)) is the SIS domain. The active-site Proton donor is Glu-82. The active site involves Glu-113.

It belongs to the GCKR-like family. MurNAc-6-P etherase subfamily. As to quaternary structure, homodimer.

The enzyme catalyses N-acetyl-D-muramate 6-phosphate + H2O = N-acetyl-D-glucosamine 6-phosphate + (R)-lactate. It functions in the pathway amino-sugar metabolism; N-acetylmuramate degradation. In terms of biological role, specifically catalyzes the cleavage of the D-lactyl ether substituent of MurNAc 6-phosphate, producing GlcNAc 6-phosphate and D-lactate. The sequence is that of N-acetylmuramic acid 6-phosphate etherase from Christiangramia forsetii (strain DSM 17595 / CGMCC 1.15422 / KT0803) (Gramella forsetii).